Consider the following 426-residue polypeptide: Glutamyl-tRNA reductase (426 aa).

Residues 49 to 52, serine 109, 114 to 116, and glutamine 120 contribute to the substrate site; these read TCNR and EGQ. Cysteine 50 acts as the Nucleophile in catalysis. 189–194 is an NADP(+) binding site; sequence GAGKMS.

It belongs to the glutamyl-tRNA reductase family. Homodimer.

The catalysed reaction is (S)-4-amino-5-oxopentanoate + tRNA(Glu) + NADP(+) = L-glutamyl-tRNA(Glu) + NADPH + H(+). It participates in porphyrin-containing compound metabolism; protoporphyrin-IX biosynthesis; 5-aminolevulinate from L-glutamyl-tRNA(Glu): step 1/2. It functions in the pathway porphyrin-containing compound metabolism; chlorophyll biosynthesis. Functionally, catalyzes the NADPH-dependent reduction of glutamyl-tRNA(Glu) to glutamate 1-semialdehyde (GSA). This Thermosynechococcus vestitus (strain NIES-2133 / IAM M-273 / BP-1) protein is Glutamyl-tRNA reductase.